The sequence spans 1568 residues: Kielin/chordin-like protein (1568 aa).

The first 23 residues, 1-23 (MAGVGAAALSLLLHLGALALAAG), serve as a signal peptide directing secretion. Positions 27-49 (GAVPREPPGQQTTAHSSVLAGNS) are disordered. Positions 35-49 (GQQTTAHSSVLAGNS) are enriched in polar residues. The stretch at 60 to 87 (LGRLEAAVMELREQNKDLQTRVRQLESC) forms a coiled coil. 16 consecutive VWFC domains span residues 136-193 (RGCS…PICR), 194-253 (PGCD…PTCQ), 253-312 (QGCT…PVCD), 312-370 (DGCF…PVCD), 426-485 (PACE…PSCD), 485-544 (DSCT…PRCP), 544-602 (PDCI…NDCS), 602-661 (SGCA…PQCP), 667-725 (AGCP…PSCD), 725-782 (DGCL…PDCD), 782-841 (DGCE…PTCQ), 900-959 (HSCL…PRCR), 959-1017 (RGCL…PQCS), 1017-1085 (SDCE…PTCA), 1082-1145 (PTCA…PVCR), and 1149-1209 (QSCV…PRCL). Asn-340 carries N-linked (GlcNAc...) asparagine glycosylation. Asn-499 carries N-linked (GlcNAc...) asparagine glycosylation. Residue Asn-1090 is glycosylated (N-linked (GlcNAc...) asparagine). Residues 1213-1389 (ASCMAFGDPH…EGLWPGRPCS (177 aa)) enclose the VWFD domain. 2 disulfide bridges follow: Cys-1215-Cys-1347 and Cys-1237-Cys-1388. One can recognise a TIL domain in the interval 1483–1543 (CPLERGFVFD…EAHCIPPEAC (61 aa)).

As to quaternary structure, interacts with BMP7 and, by doing so, enhances binding to the type I receptors that contains cytoplasmic serine/threonine protein kinase domains. Also able to interact with activin-A and TGFB1.

Its subcellular location is the secreted. Its function is as follows. Enhances bone morphogenetic protein (BMP) signaling in a paracrine manner. In contrast, it inhibits both the activin-A and TGFB1-mediated signaling pathways. The chain is Kielin/chordin-like protein from Homo sapiens (Human).